A 152-amino-acid polypeptide reads, in one-letter code: Interleukin-1 family member 10 (152 aa).

This sequence belongs to the IL-1 family. As to quaternary structure, interacts with cargo receptor TMED10; the interaction mediates the translocation from the cytoplasm into the ERGIC (endoplasmic reticulum-Golgi intermediate compartment) and thereby secretion.

The protein localises to the cytoplasm. Its subcellular location is the endoplasmic reticulum-Golgi intermediate compartment. It is found in the secreted. Its function is as follows. Cytokine with immunomodulatory activity. Alone, does not induce cytokine production, but reduces IL22 and IL17A production by T-cells in response to heat-killed Candida albicans. Reduces IL36G-induced production of IL8 by peripheral blood mononuclear cells. Increases IL6 production by dendritic cells stimulated by bacterial lipopolysaccharides (LPS). Ligand for IL-36R/IL1RL2. In Mus musculus (Mouse), this protein is Interleukin-1 family member 10 (Il1f10).